A 764-amino-acid chain; its full sequence is 5-methyltetrahydropteroyltriglutamate--homocysteine methyltransferase (764 aa).

5-methyltetrahydropteroyltri-L-glutamate is bound by residues 16 to 19 and lysine 117; that span reads RELK. L-homocysteine is bound by residues 442–444 and glutamate 495; that span reads IGS. L-methionine-binding positions include 442 to 444 and glutamate 495; that span reads IGS. 5-methyltetrahydropteroyltri-L-glutamate contacts are provided by residues 526 to 527 and tryptophan 572; that span reads RC. Residue aspartate 610 participates in L-homocysteine binding. Aspartate 610 serves as a coordination point for L-methionine. 5-methyltetrahydropteroyltri-L-glutamate is bound at residue glutamate 616. Histidine 652, cysteine 654, and glutamate 676 together coordinate Zn(2+). Histidine 705 serves as the catalytic Proton donor. Cysteine 737 is a binding site for Zn(2+).

The protein belongs to the vitamin-B12 independent methionine synthase family. Requires Zn(2+) as cofactor.

It carries out the reaction 5-methyltetrahydropteroyltri-L-glutamate + L-homocysteine = tetrahydropteroyltri-L-glutamate + L-methionine. It participates in amino-acid biosynthesis; L-methionine biosynthesis via de novo pathway; L-methionine from L-homocysteine (MetE route): step 1/1. In terms of biological role, catalyzes the transfer of a methyl group from 5-methyltetrahydrofolate to homocysteine resulting in methionine formation. This is 5-methyltetrahydropteroyltriglutamate--homocysteine methyltransferase from Bordetella petrii (strain ATCC BAA-461 / DSM 12804 / CCUG 43448).